The primary structure comprises 302 residues: Thioredoxin-like protein CDSP32, chloroplastic (302 aa).

A chloroplast-targeting transit peptide spans methionine 1 to lysine 56. A Thioredoxin domain is found at histidine 163–valine 298. Active-site nucleophile residues include cysteine 219 and cysteine 222. A disulfide bond links cysteine 219 and cysteine 222.

Belongs to the thioredoxin family. In terms of assembly, interacts with the plastidial peroxiredoxin BAS1.

It is found in the plastid. Its subcellular location is the chloroplast stroma. Probable thiol-disulfide oxidoreductase involved in resistance to oxidative stress. May participate in the reduction of alkyl hydroperoxides derived from oxidative stress by acting as a physiological electron donor to the BAS1 peroxiredoxin. May regenerate methionine sulfoxide reductase B1 (MSRB1) activity through sulfenic acid reduction. This chain is Thioredoxin-like protein CDSP32, chloroplastic (CDSP32), found in Arabidopsis thaliana (Mouse-ear cress).